Consider the following 112-residue polypeptide: Protein lin-52 homolog (112 aa).

This sequence belongs to the lin-52 family. In terms of assembly, component of the DREAM complex.

This chain is Protein lin-52 homolog (LIN52), found in Gallus gallus (Chicken).